The primary structure comprises 876 residues: Serrate RNA effector molecule homolog (876 aa).

The tract at residues 1-90 (MGDSDDEYDR…RRDWDEHSSD (90 aa)) is disordered. N-acetylglycine is present on G2. Residue S4 is modified to Phosphoserine. A Phosphotyrosine modification is found at Y8. The segment covering 8 to 73 (YDRRRRDKFR…ERFSPPRHEL (66 aa)) has biased composition (basic and acidic residues). 3 positions are modified to phosphoserine: S67, S74, and S136. K150 participates in a covalent cross-link: Glycyl lysine isopeptide (Lys-Gly) (interchain with G-Cter in SUMO2). The interval 271 to 412 (EEEEEQAGKP…KPKDAAGLEC (142 aa)) is disordered. Residues 297–347 (DGERKTNDKDEKKEDGKQAENDSSNDDKTKKSEGDGDKEEKKEDSEKEAKK) show a composition bias toward basic and acidic residues. Acidic residues predominate over residues 370-387 (SESESESGQAEEEKEEAE). Positions 388–412 (EALKEKEKPKEEEWEKPKDAAGLEC) are enriched in basic and acidic residues. Residues S493 and S540 each carry the phosphoserine modification. T544 is modified (phosphothreonine). A Phosphoserine modification is found at S570. The disordered stretch occupies residues 575–598 (ELLGSSGGAPPEEPPKEGNPAEIN). Position 671 is a phosphothreonine (T671). S679 carries the phosphoserine modification. Omega-N-methylarginine is present on residues R833, R840, and R850. Residues 835–854 (NYDAFRGQGGYPGKPRNRMV) are disordered.

It belongs to the ARS2 family. In terms of assembly, interacts with NCBP1 and DROSHA. Interacts with CASP8AP2 and ERBB4. Interacts with LUZP4. Interacts with NCBP2/CBP20 and NCBP3. Interacts with MTREX. Ubiquitously expressed.

The protein localises to the nucleus. It is found in the nucleoplasm. The protein resides in the cytoplasm. In terms of biological role, acts as a mediator between the cap-binding complex (CBC) and the primary microRNAs (miRNAs) processing machinery during cell proliferation. Contributes to the stability and delivery of capped primary miRNA transcripts to the primary miRNA processing complex containing DGCR8 and DROSHA, thereby playing a role in RNA-mediated gene silencing (RNAi) by miRNAs. Binds capped RNAs (m7GpppG-capped RNA); however interaction is probably mediated via its interaction with NCBP1/CBP80 component of the CBC complex. Involved in cell cycle progression at S phase. Does not directly confer arsenite resistance but rather modulates arsenic sensitivity. Independently of its activity on miRNAs, necessary and sufficient to promote neural stem cell self-renewal. Does so by directly binding SOX2 promoter and positively regulating its transcription. This chain is Serrate RNA effector molecule homolog (SRRT), found in Homo sapiens (Human).